A 453-amino-acid polypeptide reads, in one-letter code: Bifunctional protein GlmU (453 aa).

Residues 1-225 (MNIVILAAGT…EWETLGVNSK (225 aa)) are pyrophosphorylase. Residues 6–9 (LAAG), Lys-20, Gln-71, 76–77 (GT), 98–100 (YGD), Gly-135, Glu-150, Asn-165, and Asn-223 contribute to the UDP-N-acetyl-alpha-D-glucosamine site. Asp-100 lines the Mg(2+) pocket. A Mg(2+)-binding site is contributed by Asn-223. The segment at 226–246 (AQLAELERIHQRNVADALLAD) is linker. Positions 247-453 (GVTLADPARI…GYVRPVKKKS (207 aa)) are N-acetyltransferase. UDP-N-acetyl-alpha-D-glucosamine contacts are provided by Arg-329 and Lys-347. His-359 functions as the Proton acceptor in the catalytic mechanism. Positions 362 and 373 each coordinate UDP-N-acetyl-alpha-D-glucosamine. Acetyl-CoA is bound by residues Ala-376, 382–383 (NY), Ser-401, and Ala-419.

It in the N-terminal section; belongs to the N-acetylglucosamine-1-phosphate uridyltransferase family. In the C-terminal section; belongs to the transferase hexapeptide repeat family. As to quaternary structure, homotrimer. Mg(2+) serves as cofactor.

It localises to the cytoplasm. It carries out the reaction alpha-D-glucosamine 1-phosphate + acetyl-CoA = N-acetyl-alpha-D-glucosamine 1-phosphate + CoA + H(+). The catalysed reaction is N-acetyl-alpha-D-glucosamine 1-phosphate + UTP + H(+) = UDP-N-acetyl-alpha-D-glucosamine + diphosphate. The protein operates within nucleotide-sugar biosynthesis; UDP-N-acetyl-alpha-D-glucosamine biosynthesis; N-acetyl-alpha-D-glucosamine 1-phosphate from alpha-D-glucosamine 6-phosphate (route II): step 2/2. Its pathway is nucleotide-sugar biosynthesis; UDP-N-acetyl-alpha-D-glucosamine biosynthesis; UDP-N-acetyl-alpha-D-glucosamine from N-acetyl-alpha-D-glucosamine 1-phosphate: step 1/1. It participates in bacterial outer membrane biogenesis; LPS lipid A biosynthesis. Catalyzes the last two sequential reactions in the de novo biosynthetic pathway for UDP-N-acetylglucosamine (UDP-GlcNAc). The C-terminal domain catalyzes the transfer of acetyl group from acetyl coenzyme A to glucosamine-1-phosphate (GlcN-1-P) to produce N-acetylglucosamine-1-phosphate (GlcNAc-1-P), which is converted into UDP-GlcNAc by the transfer of uridine 5-monophosphate (from uridine 5-triphosphate), a reaction catalyzed by the N-terminal domain. This chain is Bifunctional protein GlmU, found in Burkholderia multivorans (strain ATCC 17616 / 249).